Here is an 835-residue protein sequence, read N- to C-terminus: Protein P (835 aa).

Positions 1-176 are terminal protein domain (TP); the sequence is MPLSYQHFRK…FFGTPYTWEH (176 aa). Residues 177 to 334 are spacer; it reads KLQHGTQPVN…HCLHHIVKLL (158 aa). Disordered regions lie at residues 211 to 235 and 258 to 288; these read LGQK…WSRT and RHPS…PTSH. Residues 335–680 are polymerase/reverse transcriptase domain (RT); that stretch reads DDWGPCQHHG…YMHLYPVARQ (346 aa). In terms of domain architecture, Reverse transcriptase spans 345–590; sequence HHFIRIPRTP…KALNFMGYVI (246 aa). Mg(2+) contacts are provided by Asp417, Asp541, and Asp542.

It belongs to the hepadnaviridae P protein family.

The enzyme catalyses DNA(n) + a 2'-deoxyribonucleoside 5'-triphosphate = DNA(n+1) + diphosphate. It catalyses the reaction Endonucleolytic cleavage to 5'-phosphomonoester.. Activated by host HSP70 and HSP40 in vitro to be able to bind the epsilon loop of the pgRNA. Because deletion of the RNase H region renders the protein partly chaperone-independent, the chaperones may be needed indirectly to relieve occlusion of the RNA-binding site by this domain. Inhibited by several reverse-transcriptase inhibitors: Lamivudine, Adefovir and Entecavir. Multifunctional enzyme that converts the viral RNA genome into dsDNA in viral cytoplasmic capsids. This enzyme displays a DNA polymerase activity that can copy either DNA or RNA templates, and a ribonuclease H (RNase H) activity that cleaves the RNA strand of RNA-DNA heteroduplexes in a partially processive 3'- to 5'-endonucleasic mode. Neo-synthesized pregenomic RNA (pgRNA) are encapsidated together with the P protein, and reverse-transcribed inside the nucleocapsid. Initiation of reverse-transcription occurs first by binding the epsilon loop on the pgRNA genome, and is initiated by protein priming, thereby the 5'-end of (-)DNA is covalently linked to P protein. Partial (+)DNA is synthesized from the (-)DNA template and generates the relaxed circular DNA (RC-DNA) genome. After budding and infection, the RC-DNA migrates in the nucleus, and is converted into a plasmid-like covalently closed circular DNA (cccDNA). The activity of P protein does not seem to be necessary for cccDNA generation, and is presumably released from (+)DNA by host nuclear DNA repair machinery. The protein is Protein P of Woolly monkey hepatitis B virus (isolate Louisville) (WMHBV).